Here is a 104-residue protein sequence, read N- to C-terminus: Phosphoribosyl-ATP pyrophosphatase (104 aa).

It belongs to the PRA-PH family.

Its subcellular location is the cytoplasm. The catalysed reaction is 1-(5-phospho-beta-D-ribosyl)-ATP + H2O = 1-(5-phospho-beta-D-ribosyl)-5'-AMP + diphosphate + H(+). Its pathway is amino-acid biosynthesis; L-histidine biosynthesis; L-histidine from 5-phospho-alpha-D-ribose 1-diphosphate: step 2/9. This Allorhizobium ampelinum (strain ATCC BAA-846 / DSM 112012 / S4) (Agrobacterium vitis (strain S4)) protein is Phosphoribosyl-ATP pyrophosphatase.